We begin with the raw amino-acid sequence, 464 residues long: Glucose N-acetyltransferase 1 (464 aa).

The Cytoplasmic portion of the chain corresponds to 1-14 (MKLVLGNGLVNLSW). The chain crosses the membrane as a helical; Signal-anchor for type II membrane protein span at residues 15 to 35 (EYMLSFSILLYFIFTQLIFVF). Residues 36-464 (EDHSLAKNLK…QKLHNELWMV (429 aa)) are Lumenal-facing. Positions 167-169 (DAD) match the DXD motif. 4 N-linked (GlcNAc...) asparagine glycosylation sites follow: Asn-180, Asn-186, Asn-248, and Asn-310.

This sequence belongs to the GNT1 family.

Its subcellular location is the golgi apparatus membrane. It localises to the vacuole membrane. N-acetylglucosaminyltransferase involved in the Golgi-specific modification of N-linked glycans. This is Glucose N-acetyltransferase 1 (GNT1) from Debaryomyces hansenii (strain ATCC 36239 / CBS 767 / BCRC 21394 / JCM 1990 / NBRC 0083 / IGC 2968) (Yeast).